We begin with the raw amino-acid sequence, 127 residues long: Protein ApaG (127 aa).

Residues 3–127 (DDPRYRVEVE…FVLSVPRTLH (125 aa)) form the ApaG domain.

This is Protein ApaG from Xanthomonas euvesicatoria pv. vesicatoria (strain 85-10) (Xanthomonas campestris pv. vesicatoria).